Here is a 208-residue protein sequence, read N- to C-terminus: F-box/kelch-repeat protein At2g43270 (208 aa).

In terms of domain architecture, F-box spans 1-44 (MIYVVPDLLEEIFLGLPLKSILRFKTVSKQWRSILESKSFAERR). Residues 149 to 200 (RDKFNGSYKVVRMCFSPVEKCEVLDVETGEWSELNPPPNDIDVGRKSVCVNG) form a Kelch repeat.

The chain is F-box/kelch-repeat protein At2g43270 from Arabidopsis thaliana (Mouse-ear cress).